Consider the following 301-residue polypeptide: uncharacterized protein (301 aa).

Disordered stretches follow at residues 167–186 (DVHLNSTTPPHTAQVSPKER) and 225–244 (ASESSLETSSVSSPQPEGAS). The segment covering 170 to 181 (LNSTTPPHTAQV) has biased composition (polar residues). The segment covering 226 to 237 (SESSLETSSVSS) has biased composition (low complexity).

This is an uncharacterized protein from Mus musculus (Mouse).